The chain runs to 182 residues: MQLNIPTWLTLFRVVMIPFFVLAFYLPFKWAPLCCALIFVLAAVTDWFDGFLARRWKQTTRFGAFLDPVADKVMVAMALVLVAEHFHSWWITLPAATMIAREIIISALREWMAEIGKRSSVAVSWIGKVKTTAQMLALVTLLWRPDDIVSGIGIAALYVAAVLTFWSMFQYLYAARHDLFEH.

Topologically, residues 1-12 (MQLNIPTWLTLF) are cytoplasmic. A helical membrane pass occupies residues 13–37 (RVVMIPFFVLAFYLPFKWAPLCCAL). The Periplasmic portion of the chain corresponds to 38–60 (IFVLAAVTDWFDGFLARRWKQTT). The helical transmembrane segment at 61–81 (RFGAFLDPVADKVMVAMALVL) threads the bilayer. Topologically, residues 82–86 (VAEHF) are cytoplasmic. Residues 87-107 (HSWWITLPAATMIAREIIISA) traverse the membrane as a helical segment. Over 108–145 (LREWMAEIGKRSSVAVSWIGKVKTTAQMLALVTLLWRP) the chain is Periplasmic. The helical transmembrane segment at 146-168 (DDIVSGIGIAALYVAAVLTFWSM) threads the bilayer. The Cytoplasmic portion of the chain corresponds to 169–181 (FQYLYAARHDLFE).

This sequence belongs to the CDP-alcohol phosphatidyltransferase class-I family.

It localises to the cell inner membrane. It catalyses the reaction a CDP-1,2-diacyl-sn-glycerol + sn-glycerol 3-phosphate = a 1,2-diacyl-sn-glycero-3-phospho-(1'-sn-glycero-3'-phosphate) + CMP + H(+). It participates in phospholipid metabolism; phosphatidylglycerol biosynthesis; phosphatidylglycerol from CDP-diacylglycerol: step 1/2. In terms of biological role, catalyzes the conversion of cytidine diphosphate diacylglycerol (CDP-DG) and glycerol 3-phosphate into phosphatidylglycerol. Essential for the synthesis of anionic phospholipids, thereby playing a role in balancing the ratio of zwitterionic and anionic phospholipids, which is thought to be important for normal membrane function. This is CDP-diacylglycerol--glycerol-3-phosphate 3-phosphatidyltransferase from Sodalis glossinidius (strain morsitans).